Here is a 2543-residue protein sequence, read N- to C-terminus: Highly reducing polyketide synthase PKS2 (2543 aa).

A Ketosynthase family 3 (KS3) domain is found at 4–425; sequence EPRIAVIGLS…GSNSAILLEG (422 aa). Residues C174, H309, and H349 each act as for beta-ketoacyl synthase activity in the active site. The malonyl-CoA:ACP transacylase (MAT) domain stretch occupies residues 573-902; that stretch reads VFTGQGAQHA…TYLPTLFRGT (330 aa). The For malonyltransferase activity role is filled by S662. An N-terminal hotdog fold region spans residues 969–1101; sequence HPLLGRKISP…GQIEAEMTDM (133 aa). A PKS/mFAS DH domain is found at 969-1281; the sequence is HPLLGRKISP…FRNIGSAEEV (313 aa). Positions 969–1283 are dehydratase (DH) domain; that stretch reads HPLLGRKISP…NIGSAEEVID (315 aa). Catalysis depends on H1001, which acts as the Proton acceptor; for dehydratase activity. The interval 1119–1281 is C-terminal hotdog fold; that stretch reads TGLKEHDINA…FRNIGSAEEV (163 aa). Residue D1188 is the Proton donor; for dehydratase activity of the active site. A methyltransferase (CMet) domain region spans residues 1438–1631; the sequence is SKVLGYLTEY…LPSRYGTDKP (194 aa). Residues 1847-2159 are enoylreductase (ER) domain; sequence GSPDTIYFQR…SGEHMGKMVI (313 aa). The interval 2184-2359 is ketoreductase (KR) domain; sequence ATYLVAGGTR…YTVSIALPVV (176 aa). The Carrier domain occupies 2463-2540; the sequence is DPLIGLTEAM…ALATEILSQR (78 aa). Residue S2500 is modified to O-(pantetheine 4'-phosphoryl)serine.

It participates in secondary metabolite biosynthesis. In terms of biological role, highly reducing polyketide synthase; part of the gene cluster that mediates the biosynthesis of phomenoic acid, a long chain aliphatic carboxylic acid that does not appear to be essential for pathogenicity but may play a role in allowing to outcompete other fungi in the environmental niche via its antifungal properties. The polyketide synthase produces the long methylated aliphatic carboxylic acid chain of phomenoic acid. The cluster-specific cytochrome P450 monooxygenase may then hydroxylate the methyl group of carbon 31. The putative dehydrogenase YogA, which has no obvious role in phomenoic acid biosynthesis, may further modify phomenoic acid to produce a compound not identified yet. This chain is Highly reducing polyketide synthase PKS2, found in Leptosphaeria maculans (strain JN3 / isolate v23.1.3 / race Av1-4-5-6-7-8) (Blackleg fungus).